A 329-amino-acid chain; its full sequence is Neuropeptides B/W receptor type 1 (329 aa).

Residues 1 to 39 are Extracellular-facing; the sequence is MHNLSLFEPGRGNVSCGGPFLGCPNESNPAPLPLPQPLA. N-linked (GlcNAc...) asparagine glycosylation is found at Asn-3, Asn-13, and Asn-25. Residues 40-63 traverse the membrane as a helical segment; it reads VAVPVVYGVICAVGLAGNSAVLYV. The Cytoplasmic segment spans residues 64–74; the sequence is LLRTPRMKTVT. The chain crosses the membrane as a helical span at residues 75 to 99; the sequence is NVFILNLAIADELFTLVLPINIADF. Topologically, residues 100 to 114 are extracellular; the sequence is LLRRWPFGEVMCKLI. A disulfide bond links Cys-111 and Cys-190. A helical transmembrane segment spans residues 115-134; that stretch reads VAVDQYNTFSSLYFLAVMSA. The Cytoplasmic portion of the chain corresponds to 135–159; the sequence is DRYLVVLATAESRRVSGRTYGAARA. The chain crosses the membrane as a helical span at residues 160 to 179; the sequence is VSLAVWALVTLVVLPFAVFA. Residues 180 to 204 lie on the Extracellular side of the membrane; that stretch reads RLDEEQGRRQCVLVFPQPEAFWWRA. The helical transmembrane segment at 205–226 threads the bilayer; it reads SRLYTLVLGFAIPVSTICALYI. Residues 227–250 are Cytoplasmic-facing; sequence TLLCRLRAIQLDSHAKALDRAKKR. A helical transmembrane segment spans residues 251 to 275; the sequence is VTLLVVAILAVCLLCWTPYHLSTIV. Residues 276 to 285 are Extracellular-facing; the sequence is ALTTDLPQTP. The helical transmembrane segment at 286–300 threads the bilayer; it reads LVIGISYFITSLSYA. Residues 301–329 lie on the Cytoplasmic side of the membrane; that stretch reads NSCLNPFLYAFLDDSFRRSLRQLVSCRTA.

Belongs to the G-protein coupled receptor 1 family.

The protein localises to the cell membrane. In terms of biological role, interacts specifically with a number of opioid ligands. Receptor for neuropeptides B and W, which may be involved in neuroendocrine system regulation, food intake and the organization of other signals. This is Neuropeptides B/W receptor type 1 (Npbwr1) from Rattus norvegicus (Rat).